A 154-amino-acid polypeptide reads, in one-letter code: Protein Smg homolog (154 aa).

The protein belongs to the Smg family.

The chain is Protein Smg homolog from Aromatoleum aromaticum (strain DSM 19018 / LMG 30748 / EbN1) (Azoarcus sp. (strain EbN1)).